The primary structure comprises 241 residues: Large ribosomal subunit protein uL2 (241 aa).

The disordered stretch occupies residues 201–241; it reads VDHPHGGGNRQHPGRPTTVSRHAPPGRKVGSIAAKRTGLKR.

This sequence belongs to the universal ribosomal protein uL2 family. Part of the 50S ribosomal subunit. Forms a bridge to the 30S subunit in the 70S ribosome.

In terms of biological role, one of the primary rRNA binding proteins. Required for association of the 30S and 50S subunits to form the 70S ribosome, for tRNA binding and peptide bond formation. It has been suggested to have peptidyltransferase activity; this is somewhat controversial. Makes several contacts with the 16S rRNA in the 70S ribosome. The chain is Large ribosomal subunit protein uL2 from Methanobrevibacter smithii (strain ATCC 35061 / DSM 861 / OCM 144 / PS).